Reading from the N-terminus, the 430-residue chain is Agropine synthesis reductase (430 aa).

203 to 227 (LISGPSRGIGKAIAENLIAHGYRMS) provides a ligand contact to NAD(+). S333 lines the substrate pocket. The Proton acceptor role is filled by Y346.

This sequence belongs to the short-chain dehydrogenases/reductases (SDR) family.

It participates in opine metabolism; mannopine biosynthesis. In terms of biological role, reduces deoxy-fructosyl-glutamine to mannopine. This chain is Agropine synthesis reductase (mas1), found in Rhizobium rhizogenes (Agrobacterium rhizogenes).